The primary structure comprises 306 residues: MTNHIAGGGNPPGPEGDASAGIDVVLVTGLSGAGRGTAAKVLEDLGWYVADNLPPQLITRMVDFGLAAGSRITQLAVVMDVRSRGFTGDLDSVRNELATRNITPRVVFMEASDDMLVRRYEQNRRSHPLQGGHTLAEGIAAERKMLEPVRATADLIIDTSTLSVRGLRENIERAFGGDAAAITSVTVESFGFKYGLPMDADMVMDVRFLPNPHWVDELRPLTGQHQAVSDYVLGRPGASEFLQTYHELLSLVVEGYRREGKRYMTVAIGCTGGKHRSVAIAEALVGLLRSNSRLSVRVLHRDLGRE.

29–36 (GLSGAGRG) contributes to the ATP binding site. Position 80 to 83 (80 to 83 (DVRS)) interacts with GTP.

It belongs to the RapZ-like family.

Its function is as follows. Displays ATPase and GTPase activities. The polypeptide is Nucleotide-binding protein MUL_1815 (Mycobacterium ulcerans (strain Agy99)).